The primary structure comprises 54 residues: Hydrophobic protein RCI2A (54 aa).

A run of 2 helical transmembrane segments spans residues 2 to 22 (STAT…GVFL) and 32 to 52 (ICLV…IYVL).

The protein belongs to the UPF0057 (PMP3) family.

It localises to the membrane. The polypeptide is Hydrophobic protein RCI2A (RCI2A) (Arabidopsis thaliana (Mouse-ear cress)).